Consider the following 296-residue polypeptide: ATP synthase gamma chain (296 aa).

The protein belongs to the ATPase gamma chain family. F-type ATPases have 2 components, CF(1) - the catalytic core - and CF(0) - the membrane proton channel. CF(1) has five subunits: alpha(3), beta(3), gamma(1), delta(1), epsilon(1). CF(0) has three main subunits: a, b and c.

Its subcellular location is the cell inner membrane. Produces ATP from ADP in the presence of a proton gradient across the membrane. The gamma chain is believed to be important in regulating ATPase activity and the flow of protons through the CF(0) complex. The chain is ATP synthase gamma chain from Gluconobacter oxydans (strain 621H) (Gluconobacter suboxydans).